Here is a 187-residue protein sequence, read N- to C-terminus: Translation initiation factor IF-3 (187 aa).

It belongs to the IF-3 family. In terms of assembly, monomer.

It is found in the cytoplasm. Functionally, IF-3 binds to the 30S ribosomal subunit and shifts the equilibrium between 70S ribosomes and their 50S and 30S subunits in favor of the free subunits, thus enhancing the availability of 30S subunits on which protein synthesis initiation begins. This is Translation initiation factor IF-3 from Leptospira biflexa serovar Patoc (strain Patoc 1 / Ames).